The sequence spans 181 residues: Inner membrane-spanning protein YciB (181 aa).

5 consecutive transmembrane segments (helical) span residues 3–23, 54–74, 81–101, 119–139, and 149–169; these read LLFD…FGIY, SLAI…PWFI, IYWL…KPLI, LNLA…YVAY, and FKLF…AFYL.

The protein belongs to the YciB family.

Its subcellular location is the cell inner membrane. In terms of biological role, plays a role in cell envelope biogenesis, maintenance of cell envelope integrity and membrane homeostasis. This is Inner membrane-spanning protein YciB from Legionella pneumophila subsp. pneumophila (strain Philadelphia 1 / ATCC 33152 / DSM 7513).